We begin with the raw amino-acid sequence, 425 residues long: Glutamyl-tRNA reductase (425 aa).

Substrate-binding positions include 49–52 (TCNR), Ser109, 114–116 (EGQ), and Gln120. Cys50 functions as the Nucleophile in the catalytic mechanism. 189–194 (GAGETG) lines the NADP(+) pocket.

Belongs to the glutamyl-tRNA reductase family. In terms of assembly, homodimer.

It catalyses the reaction (S)-4-amino-5-oxopentanoate + tRNA(Glu) + NADP(+) = L-glutamyl-tRNA(Glu) + NADPH + H(+). It functions in the pathway porphyrin-containing compound metabolism; protoporphyrin-IX biosynthesis; 5-aminolevulinate from L-glutamyl-tRNA(Glu): step 1/2. The protein operates within porphyrin-containing compound metabolism; chlorophyll biosynthesis. Catalyzes the NADPH-dependent reduction of glutamyl-tRNA(Glu) to glutamate 1-semialdehyde (GSA). The polypeptide is Glutamyl-tRNA reductase (Chlorobium luteolum (strain DSM 273 / BCRC 81028 / 2530) (Pelodictyon luteolum)).